The sequence spans 417 residues: Actin-related protein 10 (417 aa).

Belongs to the actin family. In terms of assembly, subunit of dynactin, a multiprotein complex part of a tripartite complex with dynein and a adapter, such as BICDL1, BICD2 or HOOK3. The dynactin complex is built around ACTR1A/ACTB filament and consists of an actin-related filament composed of a shoulder domain, a pointed end and a barbed end. Its length is defined by its flexible shoulder domain. The soulder is composed of 2 DCTN1 subunits, 4 DCTN2 and 2 DCTN3. The 4 DCNT2 (via N-terminus) bind the ACTR1A filament and act as molecular rulers to determine the length. The pointed end is important for binding dynein-dynactin cargo adapters. Consists of 4 subunits: ACTR10, DCNT4, DCTN5 and DCTN6. The barbed end is composed of a CAPZA1:CAPZB heterodimers, which binds ACTR1A/ACTB filament and dynactin and stabilizes dynactin.

Its subcellular location is the cytoplasm. The protein localises to the cytoskeleton. Part of the dynactin complex that activates the molecular motor dynein for ultra-processive transport along microtubules. The protein is Actin-related protein 10 (ACTR10) of Sus scrofa (Pig).